The following is a 123-amino-acid chain: Large ribosomal subunit protein bL12 (123 aa).

This sequence belongs to the bacterial ribosomal protein bL12 family. In terms of assembly, homodimer. Part of the ribosomal stalk of the 50S ribosomal subunit. Forms a multimeric L10(L12)X complex, where L10 forms an elongated spine to which 2 to 4 L12 dimers bind in a sequential fashion. Binds GTP-bound translation factors.

Functionally, forms part of the ribosomal stalk which helps the ribosome interact with GTP-bound translation factors. Is thus essential for accurate translation. In Metamycoplasma arthritidis (strain 158L3-1) (Mycoplasma arthritidis), this protein is Large ribosomal subunit protein bL12.